A 512-amino-acid chain; its full sequence is 2-isopropylmalate synthase (512 aa).

The region spanning 4-266 is the Pyruvate carboxyltransferase domain; the sequence is IQFFDTTLRD…ETNIVLNQFK (263 aa). Positions 13, 201, 203, and 237 each coordinate Mn(2+). The segment at 390 to 512 is regulatory domain; sequence ELKHLQVQYV…SKQADFEEVK (123 aa).

The protein belongs to the alpha-IPM synthase/homocitrate synthase family. LeuA type 1 subfamily. In terms of assembly, homodimer. Mn(2+) is required as a cofactor.

It is found in the cytoplasm. The catalysed reaction is 3-methyl-2-oxobutanoate + acetyl-CoA + H2O = (2S)-2-isopropylmalate + CoA + H(+). Its pathway is amino-acid biosynthesis; L-leucine biosynthesis; L-leucine from 3-methyl-2-oxobutanoate: step 1/4. Functionally, catalyzes the condensation of the acetyl group of acetyl-CoA with 3-methyl-2-oxobutanoate (2-ketoisovalerate) to form 3-carboxy-3-hydroxy-4-methylpentanoate (2-isopropylmalate). The sequence is that of 2-isopropylmalate synthase from Listeria monocytogenes serotype 4a (strain HCC23).